The following is a 402-amino-acid chain: UPF0261 protein y4oU (402 aa).

It belongs to the UPF0261 family.

The chain is UPF0261 protein y4oU from Sinorhizobium fredii (strain NBRC 101917 / NGR234).